Consider the following 496-residue polypeptide: Fibronectin type III and SPRY domain-containing protein 1 (496 aa).

Positions 4–99 (QREALRKIIT…ALESSEELLE (96 aa)) form a coiled coil. One can recognise a COS domain in the interval 105–162 (LQAMDREDFPQAAKQIKDGVTMAPAFRLSLKAKVSDNMSHLMVDFAQERQMLQALKFL). The Fibronectin type-III domain occupies 164-268 (VPSAPVIDLA…EPVTLETPAF (105 aa)). The B30.2/SPRY domain maps to 268 to 477 (FMFRLDASTS…VTTGLQVPSS (210 aa)). Residues 301 to 336 (KAREKDGKGRTASPINSPARGTPSPKRMPSGRGGRD) are disordered. Residues R310 and R320 each carry the omega-N-methylarginine modification.

As to quaternary structure, oligomerization is required for binding to microtubules.

It localises to the cytoplasm. It is found in the cytoskeleton. Its subcellular location is the microtubule organizing center. The protein resides in the centrosome. The protein localises to the nucleus. It localises to the cleavage furrow. Functionally, may be involved in microtubule organization and stabilization. The protein is Fibronectin type III and SPRY domain-containing protein 1 (FSD1) of Macaca fascicularis (Crab-eating macaque).